Reading from the N-terminus, the 627-residue chain is 2-oxoacid:ferredoxin oxidoreductase 1, subunit alpha (627 aa).

The short motif at 253–257 (YPITP) is the YPITP motif element. Substrate-binding residues include Thr-256 and Arg-344.

Heterodimer composed of an alpha and a beta subunit.

It carries out the reaction a 2-oxocarboxylate + 2 oxidized [2Fe-2S]-[ferredoxin] + CoA = an acyl-CoA + 2 reduced [2Fe-2S]-[ferredoxin] + CO2 + H(+). Its activity is regulated as follows. Inhibited by low concentration of 4-fluoro-7-nitrobenzofurazan (NBD-F). Functionally, catalyzes the coenzyme A-dependent oxidative decarboxylation of different 2-oxoacids such as 2-oxoglutarate, pyruvate and 2-oxobutyrate to form their CoA derivatives. This chain is 2-oxoacid:ferredoxin oxidoreductase 1, subunit alpha, found in Sulfurisphaera tokodaii (strain DSM 16993 / JCM 10545 / NBRC 100140 / 7) (Sulfolobus tokodaii).